Consider the following 819-residue polypeptide: Lon protease (819 aa).

Polar residues predominate over residues M1–P14. The disordered stretch occupies residues M1 to S40. Residues E18–P38 are compositionally biased toward basic and acidic residues. Positions L42 to L239 constitute a Lon N-terminal domain. G392–T399 provides a ligand contact to ATP. One can recognise a Lon proteolytic domain in the interval K634–G818. Active-site residues include S724 and K767.

It belongs to the peptidase S16 family. As to quaternary structure, homohexamer. Organized in a ring with a central cavity.

It localises to the cytoplasm. It catalyses the reaction Hydrolysis of proteins in presence of ATP.. Functionally, ATP-dependent serine protease that mediates the selective degradation of mutant and abnormal proteins as well as certain short-lived regulatory proteins. Required for cellular homeostasis and for survival from DNA damage and developmental changes induced by stress. Degrades polypeptides processively to yield small peptide fragments that are 5 to 10 amino acids long. Binds to DNA in a double-stranded, site-specific manner. This is Lon protease from Chlamydia trachomatis serovar D (strain ATCC VR-885 / DSM 19411 / UW-3/Cx).